A 919-amino-acid chain; its full sequence is Tight junction protein ZO-3 (919 aa).

The PDZ 1 domain occupies 11-93 (TATLSKDPRR…MANITVKRPR (83 aa)). The disordered stretch occupies residues 92–173 (PRRIHLPATK…SPGGGSEANG (82 aa)). A Phosphoserine modification is found at Ser112. The segment covering 117–131 (GPQRVEEVDQGRGYD) has biased composition (basic and acidic residues). Phosphoserine is present on Ser136. The span at 147 to 163 (RRPRPGRRGRAGSHGRR) shows a compositional bias: basic residues. Phosphoserine is present on residues Ser164, Ser169, Ser203, and Ser319. Positions 195–272 (SVLVKRRDSE…KLSLLVLRDR (78 aa)) constitute a PDZ 2 domain. A disordered region spans residues 279-377 (IPPAVSDSDS…SSQSMEDRGY (99 aa)). Thr325 carries the phosphothreonine modification. Position 327 is a phosphoserine (Ser327). A compositionally biased stretch (basic and acidic residues) spans 332–360 (PRLRRESSVDSRTISEPDEQRSELPRESS). Ser371 carries the post-translational modification Phosphoserine. Residues 380–446 (DTRVVRFLKG…LTREEAVQFL (67 aa)) form the PDZ 3 domain. An SH3 domain is found at 475–549 (GDSFYIRTHF…PNQSRAEQLA (75 aa)). The region spanning 580-761 (LRRGAKKTTQ…WYQELKAIIR (182 aa)) is the Guanylate kinase-like domain. Ser591 carries the post-translational modification Phosphoserine. The segment covering 791–801 (ADSSADLSCDS) has biased composition (low complexity). Disordered stretches follow at residues 791-886 (ADSS…DSMR) and 899-919 (RVHD…ATDL). Residues 812–828 (EGGAYTDGEGYTDGEGG) are compositionally biased toward gly residues. Ser856, Ser905, and Ser906 each carry phosphoserine.

The protein belongs to the MAGUK family. Interacts with occludin OCLN, claudins and TPJ1. Interacts with PATJ. Interacts with UBN1. Interacts with FASLG. Interacts with CCND1. Phosphorylated.

It is found in the cell membrane. The protein localises to the cell junction. The protein resides in the tight junction. It localises to the nucleus. Functionally, TJP1, TJP2, and TJP3 are closely related scaffolding proteins that link tight junction (TJ) transmembrane proteins such as claudins, junctional adhesion molecules, and occludin to the actin cytoskeleton. The tight junction acts to limit movement of substances through the paracellular space and as a boundary between the compositionally distinct apical and basolateral plasma membrane domains of epithelial and endothelial cells. Binds and recruits PATJ to tight junctions where it connects and stabilizes apical and lateral components of tight junctions. Promotes cell-cycle progression through the sequestration of cyclin D1 (CCND1) at tight junctions during mitosis which prevents CCND1 degradation during M-phase and enables S-phase transition. With TJP1 and TJP2, participates in the junctional retention and stability of the transcription factor DBPA, but is not involved in its shuttling to the nucleus. Contrary to TJP2, TJP3 is dispensable for individual viability, embryonic development, epithelial differentiation, and the establishment of TJs, at least in the laboratory environment. The polypeptide is Tight junction protein ZO-3 (TJP3) (Homo sapiens (Human)).